A 275-amino-acid polypeptide reads, in one-letter code: S-formylglutathione hydrolase (275 aa).

Residues Ser145, Asp221, and His254 each act as charge relay system in the active site.

It belongs to the esterase D family.

It catalyses the reaction S-formylglutathione + H2O = formate + glutathione + H(+). Its function is as follows. Serine hydrolase involved in the detoxification of formaldehyde. Hydrolyzes S-formylglutathione to glutathione and formate. In Haemophilus influenzae (strain ATCC 51907 / DSM 11121 / KW20 / Rd), this protein is S-formylglutathione hydrolase.